The following is a 742-amino-acid chain: CD44 antigen (742 aa).

A signal peptide spans 1 to 20 (MDKFWWHAAWGLCLVPLSLA). At 21–649 (QIDLNITCRF…GPIRTPQIPE (629 aa)) the chain is on the extracellular side. Asparagine 25 is a glycosylation site (N-linked (GlcNAc...) asparagine). 3 disulfides stabilise this stretch: cysteine 28/cysteine 129, cysteine 53/cysteine 118, and cysteine 77/cysteine 97. In terms of domain architecture, Link spans 32 to 120 (GVFHVEKNGR…TSQYDTYCFN (89 aa)). Residue arginine 41 coordinates hyaluronan. Asparagine 57 carries N-linked (GlcNAc...) asparagine glycosylation. The hyaluronan site is built by arginine 78 and tyrosine 79. Asparagine 100 is a glycosylation site (N-linked (GlcNAc...) asparagine). Hyaluronan is bound at residue tyrosine 105. 2 N-linked (GlcNAc...) asparagine glycosylation sites follow: asparagine 110 and asparagine 120. Disordered stretches follow at residues 160–189 (EYRTNPEDIYPSNPTDDDVSSGSSSERSST) and 261–285 (TTQMAGTSSNTISAGWEPNEENEDE). A compositionally biased stretch (low complexity) spans 179–189 (SSGSSSERSST). O-linked (Xyl...) (chondroitin sulfate) serine glycosylation is present at serine 180. Residues 224–649 (LMSTSATATE…GPIRTPQIPE (426 aa)) form a stem region. The span at 261–273 (TTQMAGTSSNTIS) shows a compositional bias: polar residues. N-linked (GlcNAc...) asparagine glycosylation is present at asparagine 350. Disordered regions lie at residues 372 to 558 (HHEE…TLLE) and 590 to 642 (TVGD…SGPI). Low complexity predominate over residues 386-396 (QATPSSTTEET). Residues 407–421 (RWHEGYRQTPKEDSH) show a composition bias toward basic and acidic residues. The span at 422–435 (STTGTAAASAHTSH) shows a compositional bias: low complexity. 2 stretches are compositionally biased toward polar residues: residues 439 to 452 (GRTTPSPEDSSWTD) and 476 to 489 (SHSITLQPTANPNT). A compositionally biased stretch (low complexity) spans 502 to 516 (SMTTQQSNSQSFSTS). The span at 528 to 539 (TTSTLTSSNRND) shows a compositional bias: polar residues. Asparagine 548 and asparagine 599 each carry an N-linked (GlcNAc...) asparagine glycan. The segment covering 592 to 606 (GDSNSNVNRSLSGDQ) has biased composition (polar residues). Positions 619 to 629 (HGSESDGHSHG) are enriched in basic and acidic residues. Residue asparagine 636 is glycosylated (N-linked (GlcNAc...) asparagine). Residues 650 to 670 (WLIILASLLALALILAVCIAV) form a helical membrane-spanning segment. The Cytoplasmic portion of the chain corresponds to 671-742 (NSRRRCGQKK…LQNVDMKIGV (72 aa)). Serine 672 bears the Phosphoserine; by PKC mark. A required for interaction with EZR, MSN and RDX and for co-localization to microvilli region spans residues 673 to 691 (RRRCGQKKKLVINSGNGAV). 3 positions are modified to phosphoserine: serine 686, serine 697, and serine 706.

Interacts with PKN2. Interacts with TIAM1 and TIAM2. Interacts with HA, as well as other glycosaminoglycans, collagen, laminin, and fibronectin via its N-terminal segment. Interacts with UNC119. Interacts with PDPN (via extracellular domain); this interaction is required for PDPN-mediated directional migration and regulation of lamellipodia extension/stabilization during cell spreading and migration. Interacts with RDX, EZR and MSN. Interacts with EGFR. Interacts with CD74; this complex is essential for the MIF-induced signaling cascade that results in B cell survival. In terms of processing, proteolytically cleaved in the extracellular matrix by specific proteinases (possibly MMPs) in several cell lines and tumors. N-glycosylated. Post-translationally, O-glycosylated; contains chondroitin sulfate glycans which can be more or less sulfated and whose number may affect the accessibility of specific proteinases to their cleavage site(s). It is uncertain if O-glycosylation occurs on Thr-637 or Thr-638. In terms of processing, phosphorylated; activation of PKC results in the dephosphorylation of Ser-706 (constitutive phosphorylation site), and the phosphorylation of Ser-672. Detected in fibroblasts and urine (at protein level). Detected in placenta (at protein level). Isoform 10 (epithelial isoform) is expressed by cells of epithelium and highly expressed by carcinomas. Expression is repressed in neuroblastoma cells.

Its subcellular location is the cell membrane. It localises to the cell projection. The protein localises to the microvillus. The protein resides in the secreted. Its function is as follows. Cell-surface receptor that plays a role in cell-cell interactions, cell adhesion and migration, helping them to sense and respond to changes in the tissue microenvironment. Participates thereby in a wide variety of cellular functions including the activation, recirculation and homing of T-lymphocytes, hematopoiesis, inflammation and response to bacterial infection. Engages, through its ectodomain, extracellular matrix components such as hyaluronan/HA, collagen, growth factors, cytokines or proteases and serves as a platform for signal transduction by assembling, via its cytoplasmic domain, protein complexes containing receptor kinases and membrane proteases. Such effectors include PKN2, the RhoGTPases RAC1 and RHOA, Rho-kinases and phospholipase C that coordinate signaling pathways promoting calcium mobilization and actin-mediated cytoskeleton reorganization essential for cell migration and adhesion. This Homo sapiens (Human) protein is CD44 antigen (CD44).